The sequence spans 103 residues: ATP synthase F(0) complex subunit g, mitochondrial (103 aa).

The residue at position 2 (alanine 2) is an N-acetylalanine. N6-acetyllysine occurs at positions 11, 24, and 54.

It belongs to the ATPase g subunit family. As to quaternary structure, component of the ATP synthase complex composed at least of ATP5F1A/subunit alpha, ATP5F1B/subunit beta, ATP5MC1/subunit c (homooctomer), MT-ATP6/subunit a, MT-ATP8/subunit 8, ATP5ME/subunit e, ATP5MF/subunit f, ATP5MG/subunit g, ATP5MK/subunit k, ATP5MJ/subunit j, ATP5F1C/subunit gamma, ATP5F1D/subunit delta, ATP5F1E/subunit epsilon, ATP5PF/subunit F6, ATP5PB/subunit b, ATP5PD/subunit d, ATP5PO/subunit OSCP. ATP synthase complex consists of a soluble F(1) head domain (subunits alpha(3) and beta(3)) - the catalytic core - and a membrane F(0) domain - the membrane proton channel (subunits c, a, 8, e, f, g, k and j). These two domains are linked by a central stalk (subunits gamma, delta, and epsilon) rotating inside the F1 region and a stationary peripheral stalk (subunits F6, b, d, and OSCP).

It localises to the mitochondrion. The protein localises to the mitochondrion inner membrane. Subunit g, of the mitochondrial membrane ATP synthase complex (F(1)F(0) ATP synthase or Complex V) that produces ATP from ADP in the presence of a proton gradient across the membrane which is generated by electron transport complexes of the respiratory chain. ATP synthase complex consist of a soluble F(1) head domain - the catalytic core - and a membrane F(1) domain - the membrane proton channel. These two domains are linked by a central stalk rotating inside the F(1) region and a stationary peripheral stalk. During catalysis, ATP synthesis in the catalytic domain of F(1) is coupled via a rotary mechanism of the central stalk subunits to proton translocation. In vivo, can only synthesize ATP although its ATP hydrolase activity can be activated artificially in vitro. Part of the complex F(0) domain. In Rattus norvegicus (Rat), this protein is ATP synthase F(0) complex subunit g, mitochondrial.